The following is a 485-amino-acid chain: D-alanine--D-alanyl carrier protein ligase (485 aa).

T144–S145 lines the ATP pocket. D189 is a D-alanine binding site. Residue N284–T289 coordinates ATP. V293 lines the D-alanine pocket. Residues D365 and K473 each contribute to the ATP site. K473 provides a ligand contact to D-alanine.

Belongs to the ATP-dependent AMP-binding enzyme family. DltA subfamily.

It localises to the cytoplasm. It carries out the reaction holo-[D-alanyl-carrier protein] + D-alanine + ATP = D-alanyl-[D-alanyl-carrier protein] + AMP + diphosphate. The protein operates within cell wall biogenesis; lipoteichoic acid biosynthesis. In terms of biological role, catalyzes the first step in the D-alanylation of lipoteichoic acid (LTA), the activation of D-alanine and its transfer onto the D-alanyl carrier protein (Dcp) DltC. In an ATP-dependent two-step reaction, forms a high energy D-alanyl-AMP intermediate, followed by transfer of the D-alanyl residue as a thiol ester to the phosphopantheinyl prosthetic group of the Dcp. D-alanylation of LTA plays an important role in modulating the properties of the cell wall in Gram-positive bacteria, influencing the net charge of the cell wall. The chain is D-alanine--D-alanyl carrier protein ligase from Staphylococcus aureus (strain Mu3 / ATCC 700698).